A 63-amino-acid chain; its full sequence is Large ribosomal subunit protein uL29 (63 aa).

The protein belongs to the universal ribosomal protein uL29 family.

The sequence is that of Large ribosomal subunit protein uL29 from Neisseria meningitidis serogroup C (strain 053442).